Reading from the N-terminus, the 469-residue chain is MVVDGKTTRLRASCNACNESKVRCSQRKPTCARCERNGVECIYGLSRRTHKDAPPISMPPSQRSHNHPRGASRSSSSGGDTKANSNSSSNWHMSPNVPFMIPPQQQQQQQKEEAAAAAAATPRFQCMYTPQDATADTVNRAGLLLDMDFSSLVTGSSSPLTSVDPLSAAVTRFPTPGAEHTNPWALGPFFGGNTNNNSINNPDWTRQPTTMGPMITVPTTAPPSPSPSCTECSCHAGVTELLSSMRGGGDDRRLSLDAQLAKLKRCIVSSETSMGCAHGRDDAEPIHILAVSTLIGYVIDEFEMLASESPLRLSSSLADMSGSRNAERVAESILSSGSDESMSMSSMAATTGVNNMSMSMSMGNLLEPRLSWGVLELEDDDEVDLRQRLYLLSFRKLERLLSQLTIYLRNLHDARAGLPEPSRHMAFVMACDYTRLWLEKKAEDVKRMFLVARPAGDETMDPALMFTAH.

A DNA-binding region (zn(2)-C6 fungal-type) is located at residues 14-41 (CNACNESKVRCSQRKPTCARCERNGVEC). The interval 49 to 118 (THKDAPPISM…QQKEEAAAAA (70 aa)) is disordered. Residues 82-93 (KANSNSSSNWHM) show a composition bias toward polar residues. Over residues 104–118 (QQQQQQQKEEAAAAA) the composition is skewed to low complexity.

It localises to the nucleus. Functionally, transcription factor; part of the gene cluster that mediates the biosynthesis of the phomopsins, a group of hexapeptide mycotoxins which infects lupins and causes lupinosis disease in livestock. May play a role in the regulation of the production of phomopsins. The polypeptide is Transcription factor phomD (Diaporthe leptostromiformis (Lupinosis disease fungus)).